The chain runs to 118 residues: Basic leucine zipper transcriptional factor ATF-like 3 (118 aa).

The disordered stretch occupies residues 1–69 (MSQGPPAVSV…HESLEQENSV (69 aa)). Phosphoserine occurs at positions 2 and 24. The region spanning 28–91 (DDRKVRRREK…RHLSEVLKEH (64 aa)) is the bZIP domain. The basic motif stretch occupies residues 30–55 (RKVRRREKNRVAAQRSRKKQTQKADK). A compositionally biased stretch (basic and acidic residues) spans 51–69 (QKADKLHEEHESLEQENSV). Positions 56–84 (LHEEHESLEQENSVLRREISKLKEELRHL) are leucine-zipper.

The protein belongs to the bZIP family. Heterodimer; heterodimerizes with JUN family proteins. Interacts with JUN. As to expression, highly expressed in CD8-alpha(+) classical dendritic cells (cDCs), with low to absent expression in other immune cells and non-immune tissues.

It is found in the nucleus. AP-1 family transcription factor that controls the differentiation of CD8(+) thymic conventional dendritic cells in the immune system. Acts via the formation of a heterodimer with JUN family proteins that recognizes and binds DNA sequence 5'-TGA[CG]TCA-3' and regulates expression of target genes. Required for development of CD8-alpha(+) classical dendritic cells (cDCs) and related CD103(+) dendritic cells that cross-present antigens to CD8 T-cells and produce interleukin-12 (IL12) in response to pathogens. The polypeptide is Basic leucine zipper transcriptional factor ATF-like 3 (Batf3) (Mus musculus (Mouse)).